Consider the following 382-residue polypeptide: Galactokinase (382 aa).

Residue 34-37 coordinates substrate; that stretch reads EHTD. 124-130 serves as a coordination point for ATP; sequence GAGLSSS. Residues Ser130 and Glu162 each coordinate Mg(2+). Catalysis depends on Asp174, which acts as the Proton acceptor. Substrate is bound at residue Tyr223.

The protein belongs to the GHMP kinase family. GalK subfamily.

It is found in the cytoplasm. It catalyses the reaction alpha-D-galactose + ATP = alpha-D-galactose 1-phosphate + ADP + H(+). It participates in carbohydrate metabolism; galactose metabolism. Catalyzes the transfer of the gamma-phosphate of ATP to D-galactose to form alpha-D-galactose-1-phosphate (Gal-1-P). The chain is Galactokinase from Escherichia coli O127:H6 (strain E2348/69 / EPEC).